We begin with the raw amino-acid sequence, 630 residues long: Chaperone protein HtpG (630 aa).

Residues 1–327 form an a; substrate-binding region; that stretch reads MSVETYKFDA…SEDLSLNISR (327 aa). A b region spans residues 328-551; the sequence is ETLQHSPLID…EGSMDIRTER (224 aa). The segment covering 483 to 499 has biased composition (basic and acidic residues); the sequence is TKTAKSSDTNNDGKDDT. Positions 483–504 are disordered; sequence TKTAKSSDTNNDGKDDTSSSDD. The segment at 552–630 is c; that stretch reads FLIEQKQLSS…INFFIEKSVN (79 aa).

Belongs to the heat shock protein 90 family. Homodimer.

It is found in the cytoplasm. Functionally, molecular chaperone. Has ATPase activity. This chain is Chaperone protein HtpG, found in Orientia tsutsugamushi (strain Boryong) (Rickettsia tsutsugamushi).